The primary structure comprises 322 residues: Methionyl-tRNA formyltransferase (322 aa).

115 to 118 (SLLP) provides a ligand contact to (6S)-5,6,7,8-tetrahydrofolate.

This sequence belongs to the Fmt family.

The enzyme catalyses L-methionyl-tRNA(fMet) + (6R)-10-formyltetrahydrofolate = N-formyl-L-methionyl-tRNA(fMet) + (6S)-5,6,7,8-tetrahydrofolate + H(+). In terms of biological role, attaches a formyl group to the free amino group of methionyl-tRNA(fMet). The formyl group appears to play a dual role in the initiator identity of N-formylmethionyl-tRNA by promoting its recognition by IF2 and preventing the misappropriation of this tRNA by the elongation apparatus. In Treponema denticola (strain ATCC 35405 / DSM 14222 / CIP 103919 / JCM 8153 / KCTC 15104), this protein is Methionyl-tRNA formyltransferase.